We begin with the raw amino-acid sequence, 266 residues long: Interleukin-1 beta (266 aa).

The propeptide occupies Met1–Asp114.

This sequence belongs to the IL-1 family. Monomer. In its precursor form, weakly interacts with full-length MEFV; the mature cytokine does not interact at all. Interacts with integrins ITGAV:ITGBV and ITGA5:ITGB1; integrin-binding is required for IL1B signaling. Interacts with cargo receptor TMED10; the interaction is direct and is required for the secretion of IL1B mature form. Interacts with HSP90AB1; the interaction facilitates cargo translocation into the ERGIC. Interacts with HSP90B1; the interaction facilitates cargo translocation into the ERGIC.

It is found in the cytoplasm. The protein localises to the cytosol. The protein resides in the secreted. It localises to the lysosome. Its subcellular location is the extracellular exosome. Its function is as follows. Potent pro-inflammatory cytokine. Initially discovered as the major endogenous pyrogen, induces prostaglandin synthesis, neutrophil influx and activation, T-cell activation and cytokine production, B-cell activation and antibody production, and fibroblast proliferation and collagen production. Promotes Th17 differentiation of T-cells. Synergizes with IL12/interleukin-12 to induce IFNG synthesis from T-helper 1 (Th1) cells. Plays a role in angiogenesis by inducing VEGF production synergistically with TNF and IL6. Involved in transduction of inflammation downstream of pyroptosis: its mature form is specifically released in the extracellular milieu by passing through the gasdermin-D (GSDMD) pore. In Cavia porcellus (Guinea pig), this protein is Interleukin-1 beta (IL1B).